A 96-amino-acid polypeptide reads, in one-letter code: Putative pterin-4-alpha-carbinolamine dehydratase (96 aa).

It belongs to the pterin-4-alpha-carbinolamine dehydratase family.

The catalysed reaction is (4aS,6R)-4a-hydroxy-L-erythro-5,6,7,8-tetrahydrobiopterin = (6R)-L-erythro-6,7-dihydrobiopterin + H2O. This is Putative pterin-4-alpha-carbinolamine dehydratase from Metallosphaera sedula (strain ATCC 51363 / DSM 5348 / JCM 9185 / NBRC 15509 / TH2).